The sequence spans 1501 residues: Ribulose bisphosphate carboxylase (1501 aa).

N111 lines the substrate pocket. The Proton acceptor role is filled by K166. K168 is a substrate binding site. Mg(2+) contacts are provided by K191, D193, and E194. At K191 the chain carries N6-carboxylysine. Catalysis depends on H287, which acts as the Proton acceptor. Substrate contacts are provided by R288, H321, and S368. Residues 486-508 (SAAAFVGASVAPAKKENVVARQA) constitute a propeptide, linker. N619 lines the substrate pocket. The Proton acceptor role is filled by K674. K676 contributes to the substrate binding site. Residues K699, D701, and E702 each contribute to the Mg(2+) site. An N6-carboxylysine modification is found at K699. H795 (proton acceptor) is an active-site residue. Positions 796, 829, and 876 each coordinate substrate. Residues 994–1016 (SAAAFVGASVAPAKKENVVARQA) constitute a propeptide, linker. N1127 is a substrate binding site. K1182 functions as the Proton acceptor in the catalytic mechanism. A substrate-binding site is contributed by K1184. Mg(2+)-binding residues include K1207, D1209, and E1210. Residue K1207 is modified to N6-carboxylysine. H1303 serves as the catalytic Proton acceptor. Residues R1304, H1337, and S1384 each coordinate substrate.

Belongs to the RuBisCO large chain family. Type II subfamily. Homodimer. Mg(2+) serves as cofactor.

The protein localises to the plastid. It localises to the chloroplast. It catalyses the reaction 2 (2R)-3-phosphoglycerate + 2 H(+) = D-ribulose 1,5-bisphosphate + CO2 + H2O. The catalysed reaction is D-ribulose 1,5-bisphosphate + O2 = 2-phosphoglycolate + (2R)-3-phosphoglycerate + 2 H(+). In terms of biological role, ruBisCO catalyzes two reactions: the carboxylation of D-ribulose 1,5-bisphosphate, the primary event in carbon dioxide fixation, as well as the oxidative fragmentation of the pentose substrate. Both reactions occur simultaneously and in competition at the same active site. This chain is Ribulose bisphosphate carboxylase (rbcL), found in Symbiodinium sp. (Dinoflagellate).